Here is a 151-residue protein sequence, read N- to C-terminus: Small ribosomal subunit protein eS6 (151 aa).

It belongs to the eukaryotic ribosomal protein eS6 family.

The protein is Small ribosomal subunit protein eS6 of Pyrobaculum calidifontis (strain DSM 21063 / JCM 11548 / VA1).